The chain runs to 311 residues: Aspartate carbamoyltransferase catalytic subunit (311 aa).

Carbamoyl phosphate is bound by residues arginine 58 and threonine 59. Lysine 86 is an L-aspartate binding site. Carbamoyl phosphate contacts are provided by arginine 108, histidine 136, and glutamine 139. L-aspartate-binding residues include arginine 169 and arginine 223. Carbamoyl phosphate is bound by residues glycine 264 and proline 265.

The protein belongs to the aspartate/ornithine carbamoyltransferase superfamily. ATCase family. As to quaternary structure, heterododecamer (2C3:3R2) of six catalytic PyrB chains organized as two trimers (C3), and six regulatory PyrI chains organized as three dimers (R2).

It catalyses the reaction carbamoyl phosphate + L-aspartate = N-carbamoyl-L-aspartate + phosphate + H(+). Its pathway is pyrimidine metabolism; UMP biosynthesis via de novo pathway; (S)-dihydroorotate from bicarbonate: step 2/3. Catalyzes the condensation of carbamoyl phosphate and aspartate to form carbamoyl aspartate and inorganic phosphate, the committed step in the de novo pyrimidine nucleotide biosynthesis pathway. This Desulfosudis oleivorans (strain DSM 6200 / JCM 39069 / Hxd3) (Desulfococcus oleovorans) protein is Aspartate carbamoyltransferase catalytic subunit.